A 365-amino-acid polypeptide reads, in one-letter code: Homeobox protein Nkx-6.1 (365 aa).

The tract at residues L35–A136 is disordered. Low complexity-rich tracts occupy residues P48 to S59, P69 to A92, and A110 to A136. The segment at L102 to R269 is repressor domain. At R190 the chain carries Asymmetric dimethylarginine. The homeobox DNA-binding region spans R237–H296. Positions K295–S365 are disordered. Basic and acidic residues predominate over residues K305–S318. The involved in DNA-binding stretch occupies residues Q307–S365.

Pancreatic beta cells.

Its subcellular location is the nucleus. Functionally, transcription factor which binds to specific A/T-rich DNA sequences in the promoter regions of a number of genes. Involved in the development of insulin-producing beta cells in the islets of Langerhans at the secondary transition. Together with NKX2-2 and IRX3 acts to restrict the generation of motor neurons to the appropriate region of the neural tube. Belongs to the class II proteins of neuronal progenitor factors, which are induced by SHH signals. This Rattus norvegicus (Rat) protein is Homeobox protein Nkx-6.1 (Nkx6-1).